We begin with the raw amino-acid sequence, 163 residues long: Olfactory marker protein (163 aa).

The residue at position 2 (A2) is an N-acetylalanine.

It belongs to the olfactory marker protein family. In terms of assembly, interacts with BEX1 and BEX2. In terms of tissue distribution, uniquely associated with mature olfactory receptor neurons.

Its subcellular location is the cytoplasm. May act as a modulator of the olfactory signal-transduction cascade. This is Olfactory marker protein (Omp) from Rattus norvegicus (Rat).